The sequence spans 141 residues: Large ribosomal subunit protein uL16 (141 aa).

A disordered region spans residues 1–23; sequence MLMPKRTKYRKQMKGRNRGKAHR.

The protein belongs to the universal ribosomal protein uL16 family. As to quaternary structure, part of the 50S ribosomal subunit.

Functionally, binds 23S rRNA and is also seen to make contacts with the A and possibly P site tRNAs. The sequence is that of Large ribosomal subunit protein uL16 from Helicobacter pylori (strain J99 / ATCC 700824) (Campylobacter pylori J99).